The following is a 45-amino-acid chain: Putative UPF0377 protein YJL222W-B (45 aa).

It belongs to the UPF0377 family.

This is Putative UPF0377 protein YJL222W-B from Saccharomyces cerevisiae (strain ATCC 204508 / S288c) (Baker's yeast).